The chain runs to 303 residues: Esterase (303 aa).

An Involved in the stabilization of the negatively charged intermediate by the formation of the oxyanion hole motif is present at residues 79-81; that stretch reads HGG. Catalysis depends on residues Ser149 and Glu244.

The protein belongs to the 'GDXG' lipolytic enzyme family.

The protein resides in the secreted. The polypeptide is Esterase (est) (Acinetobacter venetianus (strain ATCC 31012 / DSM 23050 / BCRC 14357 / CCUG 45561 / CIP 110063 / KCTC 2702 / LMG 19082 / RAG-1)).